Here is a 357-residue protein sequence, read N- to C-terminus: Putative minor fimbrial subunit PmfE (357 aa).

Residues 1–28 (MILNKKNIHSKSVMLFCAGIVSLMPLHA) form the signal peptide.

The protein localises to the fimbrium. The protein is Putative minor fimbrial subunit PmfE (pmfE) of Proteus mirabilis (strain HI4320).